Consider the following 660-residue polypeptide: MEEKFVLHSPFAPSGDQPEAIKALVDGIDEKKEHQVLLGVTGSGKTFTIANVIAQLNRPSLIISHNKTLASQLYSELKALFPDNRVEYFVSYFDFYKPEAYIPKSDLYIEKTSKNNKELEAMRMSAINALSIRKDTIVVASVAAIYGESNPKHYRQNFFPIEVGMQIDRKSLLLKLSQIGYERNRMELNKGQFDVKGDSIEICPGYVSDTNIRIDMFGNEIEAITLIDPLSKNVEGSRKNMTLFPATTYTVHENTIQNTVDLIKQELSERIEYFKSHDKLLEAQRIKDRTLNDLDSLLEFGYTSGIENYSRYLDGRAPGQRPYTLFDYLPDDSVIFIDESHLMIPQLHGMHNGDRARKLSLVEYGFRLPSALDNRPLRFEEFAEFKFPKIYISATPGDYELDLTHGEIVTQYIRPTGLLDPIIEIHSRDNQIEDIYDHLKEQIAKKERTLILTTTKKNAEELSLFLQEKKIKSAYIHDRFKIFERNEILKGLRMGKFDVVVGINLLKEGIDLPEVSLICVLNADSTGLMRDTRSLIQIVGRAARNDHGKVIFYANEITSSMRECIEDNLFKRKIQSEYNEKHNIIPKTIVKPIAPPIQNGILSEDHSKYYGEKDLSQMKHNKKFIDQMVRKMTQLAKANKFEEAIEIRDYLIEIGIELDK.

A Helicase ATP-binding domain is found at 26 to 196 (DGIDEKKEHQ…ELNKGQFDVK (171 aa)). Residue 39–46 (GVTGSGKT) participates in ATP binding. Positions 92–115 (YFDFYKPEAYIPKSDLYIEKTSKN) match the Beta-hairpin motif. Residues 431–593 (QIEDIYDHLK…IIPKTIVKPI (163 aa)) form the Helicase C-terminal domain. The 36-residue stretch at 622–657 (KKFIDQMVRKMTQLAKANKFEEAIEIRDYLIEIGIE) folds into the UVR domain.

It belongs to the UvrB family. As to quaternary structure, forms a heterotetramer with UvrA during the search for lesions. Interacts with UvrC in an incision complex.

It localises to the cytoplasm. Its function is as follows. The UvrABC repair system catalyzes the recognition and processing of DNA lesions. A damage recognition complex composed of 2 UvrA and 2 UvrB subunits scans DNA for abnormalities. Upon binding of the UvrA(2)B(2) complex to a putative damaged site, the DNA wraps around one UvrB monomer. DNA wrap is dependent on ATP binding by UvrB and probably causes local melting of the DNA helix, facilitating insertion of UvrB beta-hairpin between the DNA strands. Then UvrB probes one DNA strand for the presence of a lesion. If a lesion is found the UvrA subunits dissociate and the UvrB-DNA preincision complex is formed. This complex is subsequently bound by UvrC and the second UvrB is released. If no lesion is found, the DNA wraps around the other UvrB subunit that will check the other stand for damage. The protein is UvrABC system protein B of Metamycoplasma arthritidis (strain 158L3-1) (Mycoplasma arthritidis).